Reading from the N-terminus, the 150-residue chain is UPF0178 protein Bcen2424_1660 (150 aa).

It belongs to the UPF0178 family.

The protein is UPF0178 protein Bcen2424_1660 of Burkholderia cenocepacia (strain HI2424).